The sequence spans 987 residues: MSDNEKSTQTEEPNFRYNAALAQDIENKWQKIWDEQGTFWAANVNGDLKDGKGRNAEGRTAYFAMDMFPYPSGKGLHVGHPLGYLASDVVSRYHRMKGENVLHAMGYDAFGLPAEQYAVQTGQHPRVTTEANIANMSRQLHRMGLSFDNRRTFATIDPGYVRWTQWIFSRIYDSWYDEDATNPSGSKGSARPIAELVAKFESGEKAIPGHESDGKQWSDLTDAEQQDILNDFRLAYISKSPVNWCPGLGTVLANEEVTAEGKSERGNFPVFQRELRQWSMRITKYGHRLIADLDGINWPEKVKLMQRNWIGESHGASVHFIVATADGDKDMEIYTTRPDTLFGTTFAVVSPEHHLLENVPAEWPADVPEDWKGGYANPVEAVKAYRLAAEAKTAKDRVNEAGEKTGLFTGLYATNPITGAKLPLFTADYVLMDYGTGAIMAVPGGDQRDYDFAVKFGLPVIYTVTPLPDSGDDLANYEGKAPFVSHDGIVINSSVEATEAKGDALSLNGLRVDDAIAKVNAWLESAGVGKGTVSYRLRDWLFSRQRYWGEPFPIVYGEDGTPHLLPDSALPINLPDVPDYEPRTFDPMDAESNPEAPLSRNEDWVKVELDLGDGKKTYYRDTNTMPNWAGSCWYYMRYIDPTDTKHMVEKDEFDYWMGPNHNKYSGDEGGVDLYIGGVEHAVLHLLYSRFWHKVLFDLGYVDSAEPFHKLFNQGMIQAYAYTDDRGQYVPADEVVEGPADASGEPTFTWNGEHANREFGKMGKSLKNIVTPDYMYENYGADTFRLYEMSMGPLDESRPWNTRNVVGGMRFLQRLWRNVVDETTGQAHVTEDTPDEKTLKLLNNTIAEVTAEMEGMRPNTAIAKLIVLNNHLTGLKAVPRAAVEPLILMLAPIAPHICEEMWSKLGHAESLSAEPWPVADERYVGHDTVTAVVQIKGKVRAKLEVPVDIDPADLEKQALAAVADRLGGKEPRKVIVKAPKIVSIVPAE.

The 'HIGH' region motif lies at 69 to 80 (PYPSGKGLHVGH). Residues 760-764 (KMGKS) carry the 'KMSKS' region motif. ATP is bound at residue Lys763.

It belongs to the class-I aminoacyl-tRNA synthetase family.

The protein localises to the cytoplasm. It catalyses the reaction tRNA(Leu) + L-leucine + ATP = L-leucyl-tRNA(Leu) + AMP + diphosphate. This chain is Leucine--tRNA ligase, found in Bifidobacterium longum (strain NCC 2705).